We begin with the raw amino-acid sequence, 581 residues long: Pyridine nucleotide-disulfide oxidoreductase domain-containing protein 2 (581 aa).

Position 38–71 (38–71 (VVIGAGHNGLVAAAYLQRLGVNTAVFERRHVIGG)) interacts with FAD.

Belongs to the carotenoid/retinoid oxidoreductase family. In terms of assembly, interacts with COX5B; this interaction may contribute to localize PYROXD2 to the inner face of the inner mitochondrial membrane.

Its subcellular location is the mitochondrion matrix. In terms of biological role, probable oxidoreductase that may play a role as regulator of mitochondrial function. In Mus musculus (Mouse), this protein is Pyridine nucleotide-disulfide oxidoreductase domain-containing protein 2.